Consider the following 311-residue polypeptide: Malate dehydrogenase (311 aa).

NAD(+)-binding positions include 7-13 (GAAGGIG) and Asp34. Substrate is bound by residues Arg81 and Arg87. NAD(+) contacts are provided by residues Asn94 and 117-119 (ITN). Substrate contacts are provided by Asn119 and Arg153. The active-site Proton acceptor is the His177. Residue Met227 participates in NAD(+) binding.

Belongs to the LDH/MDH superfamily. MDH type 1 family. In terms of assembly, homodimer.

The catalysed reaction is (S)-malate + NAD(+) = oxaloacetate + NADH + H(+). Its function is as follows. Catalyzes the reversible oxidation of malate to oxaloacetate. The sequence is that of Malate dehydrogenase from Aliivibrio fischeri (strain ATCC 700601 / ES114) (Vibrio fischeri).